We begin with the raw amino-acid sequence, 213 residues long: Adenylate kinase (213 aa).

10 to 15 (GAGKGT) is an ATP binding site. Residues 30 to 59 (STGDIFRANIKNNTELGQKAKTYMDKGELV) are NMP. AMP contacts are provided by residues T31, R36, 57–59 (ELV), 85–88 (GFPR), and Q92. The LID stretch occupies residues 126-163 (GRRACVGCGATYHIQFNPTKVEGICDACGEKLILRDDD). R127 contacts ATP. The Zn(2+) site is built by C130 and C133. Position 136–137 (136–137 (TY)) interacts with ATP. Residues C150 and C153 each coordinate Zn(2+). AMP is bound by residues R160 and R171. Q199 is a binding site for ATP.

The protein belongs to the adenylate kinase family. Monomer.

The protein resides in the cytoplasm. It catalyses the reaction AMP + ATP = 2 ADP. Its pathway is purine metabolism; AMP biosynthesis via salvage pathway; AMP from ADP: step 1/1. In terms of biological role, catalyzes the reversible transfer of the terminal phosphate group between ATP and AMP. Plays an important role in cellular energy homeostasis and in adenine nucleotide metabolism. This Lachnospira eligens (strain ATCC 27750 / DSM 3376 / VPI C15-48 / C15-B4) (Eubacterium eligens) protein is Adenylate kinase.